The primary structure comprises 964 residues: A-type ATP synthase subunit A (964 aa).

The 127-residue stretch at 392–518 (FLGYLMANGT…LSYLFAKLGI (127 aa)) folds into the DOD-type homing endonuclease domain.

This sequence belongs to the ATPase alpha/beta chains family. Has multiple subunits with at least A(3), B(3), C, D, E, F, H, I and proteolipid K(x). Post-translationally, this protein undergoes a protein self splicing that involves a post-translational excision of the VDE intervening region (intein) followed by peptide ligation.

The protein resides in the cell membrane. It carries out the reaction ATP + H2O + 4 H(+)(in) = ADP + phosphate + 5 H(+)(out). Its function is as follows. Component of the A-type ATP synthase that produces ATP from ADP in the presence of a proton gradient across the membrane. The A chain is the catalytic subunit. The protein is A-type ATP synthase subunit A of Pyrococcus horikoshii (strain ATCC 700860 / DSM 12428 / JCM 9974 / NBRC 100139 / OT-3).